The primary structure comprises 283 residues: Phosphatidylserine decarboxylase proenzyme (283 aa).

Residues Asp90, His143, and Ser248 each act as charge relay system; for autoendoproteolytic cleavage activity in the active site. Catalysis depends on Ser248, which acts as the Schiff-base intermediate with substrate; via pyruvic acid; for decarboxylase activity. Pyruvic acid (Ser); by autocatalysis is present on Ser248.

The protein belongs to the phosphatidylserine decarboxylase family. PSD-B subfamily. Prokaryotic type I sub-subfamily. As to quaternary structure, heterodimer of a large membrane-associated beta subunit and a small pyruvoyl-containing alpha subunit. Requires pyruvate as cofactor. Is synthesized initially as an inactive proenzyme. Formation of the active enzyme involves a self-maturation process in which the active site pyruvoyl group is generated from an internal serine residue via an autocatalytic post-translational modification. Two non-identical subunits are generated from the proenzyme in this reaction, and the pyruvate is formed at the N-terminus of the alpha chain, which is derived from the carboxyl end of the proenzyme. The autoendoproteolytic cleavage occurs by a canonical serine protease mechanism, in which the side chain hydroxyl group of the serine supplies its oxygen atom to form the C-terminus of the beta chain, while the remainder of the serine residue undergoes an oxidative deamination to produce ammonia and the pyruvoyl prosthetic group on the alpha chain. During this reaction, the Ser that is part of the protease active site of the proenzyme becomes the pyruvoyl prosthetic group, which constitutes an essential element of the active site of the mature decarboxylase.

The protein resides in the cell membrane. It carries out the reaction a 1,2-diacyl-sn-glycero-3-phospho-L-serine + H(+) = a 1,2-diacyl-sn-glycero-3-phosphoethanolamine + CO2. The protein operates within phospholipid metabolism; phosphatidylethanolamine biosynthesis; phosphatidylethanolamine from CDP-diacylglycerol: step 2/2. Catalyzes the formation of phosphatidylethanolamine (PtdEtn) from phosphatidylserine (PtdSer). This chain is Phosphatidylserine decarboxylase proenzyme, found in Francisella tularensis subsp. mediasiatica (strain FSC147).